A 122-amino-acid polypeptide reads, in one-letter code: Basic phospholipase A2 F16 (122 aa).

Intrachain disulfides connect cysteine 26-cysteine 115, cysteine 28-cysteine 44, cysteine 43-cysteine 95, cysteine 49-cysteine 122, cysteine 50-cysteine 88, cysteine 57-cysteine 81, and cysteine 75-cysteine 86. Residues tyrosine 27, glycine 29, and glycine 31 each contribute to the Ca(2+) site. Residue histidine 47 is part of the active site. Aspartate 48 is a Ca(2+) binding site. Residue aspartate 89 is part of the active site.

Belongs to the phospholipase A2 family. Group II subfamily. D49 sub-subfamily. It depends on Ca(2+) as a cofactor. As to expression, expressed by the venom gland.

The protein localises to the secreted. The enzyme catalyses a 1,2-diacyl-sn-glycero-3-phosphocholine + H2O = a 1-acyl-sn-glycero-3-phosphocholine + a fatty acid + H(+). Its activity is regulated as follows. Pre-incubation with heparin markedly reduces the neurotoxicity of this toxin. Functionally, snake venom phospholipase A2 (PLA2) that produces neuromuscular blockade in chick biventer cervicis preparations in the absence and presence of crotapotin. In contrast, in mouse phrenic nerve-diaphragm preparations, the neuromuscular blockade is dependent on crotapotin. PLA2 catalyzes the calcium-dependent hydrolysis of the 2-acyl groups in 3-sn-phosphoglycerides. The protein is Basic phospholipase A2 F16 of Crotalus durissus terrificus (South American rattlesnake).